A 97-amino-acid polypeptide reads, in one-letter code: UPF0235 protein HD_0778 (97 aa).

The protein belongs to the UPF0235 family.

The protein is UPF0235 protein HD_0778 of Haemophilus ducreyi (strain 35000HP / ATCC 700724).